Consider the following 564-residue polypeptide: Serine/threonine-protein kinase DBF20 (564 aa).

S17 bears the Phosphoserine mark. A disordered region spans residues 24-62 (LNIPKPTSPQAQYRPARKSENGRLTPGLPRSYKPCDSDD). The 301-residue stretch at 169 to 469 (FQILTQVGQG…FEQVRKMSYF (301 aa)) folds into the Protein kinase domain. Residues 175–183 (VGQGGYGQV) and K198 contribute to the ATP site. D292 serves as the catalytic Proton acceptor. Residue S366 is modified to Phosphoserine. An AGC-kinase C-terminal domain is found at 470 to 547 (AEINFETLRT…RHRDGKQGSS (78 aa)). T536 is subject to Phosphothreonine.

It belongs to the protein kinase superfamily. Ser/Thr protein kinase family.

The enzyme catalyses L-seryl-[protein] + ATP = O-phospho-L-seryl-[protein] + ADP + H(+). It carries out the reaction L-threonyl-[protein] + ATP = O-phospho-L-threonyl-[protein] + ADP + H(+). Is probably a Ser/Thr-protein kinase that may function in initiation of DNA synthesis and also in late nuclear division. This is Serine/threonine-protein kinase DBF20 (DBF20) from Saccharomyces cerevisiae (strain ATCC 204508 / S288c) (Baker's yeast).